The chain runs to 31 residues: Photosystem I reaction center subunit XII (31 aa).

The helical transmembrane segment at 6–25 threads the bilayer; that stretch reads TQILAALVVALLPAFLAFRL.

The protein belongs to the PsaM family.

It is found in the cellular thylakoid membrane. This is Photosystem I reaction center subunit XII from Synechocystis sp. (strain ATCC 27184 / PCC 6803 / Kazusa).